The sequence spans 804 residues: MAVAALALLALLPQALGQHNSSYVDYNVEANPDLFPQCLDTISLSFPDCQSGPLSKNLVCDSTASPYDRAAALVSLFTLEELIANTGNTSPGVPRLGLPPYQVWSEALHGLARANFTDNGAYSWATSFPSPILSAAAFNRTLINQIASIISTQGRAFNNAGRFGLDVYSPNINTFRHPVWGRGQETPGEDAYTLTAAYAYEYITGIQGGVNPEHLKLAATAKHFAGYDIENWDNHSRLGNDVNITQQDLAEYYTPQFLVAARDAHVHSFMCSYNAVNGVPSCSNTFFLQTLLRDTFSFVDHGYVSGDCGAVYGVFNPHGYAANEPSAAADAILAGTDIDCGTSYQYHFNESITTGAVARDDIERGFIRLYANLVELGYFDGNSSSSNPYRSLGWPDVQKTDAWNISYEAAVEGIVLLKNDGTLPLASPSEGKNKSIALIGPWANATTQLQGNYYGDAPYLISPVDAFTAAGYTVHYAPGTEISTNSTANFSAALSAARAADTIVFLGGIDNTIEAEAQDRSSIAWPGNQLELISQLAAQKSDDQPLVVYQMGGGQVDSSALKSNAKVNALLWGGYPGQSGGLALRDILTGARAPAGRLTTTQYPAAYAESFSALDMNLRPNETTQNPGQTYMWYTGEPVYAFGHGLFYTTFNASSAQAAKTKYTFNITDLTSAAHPDTTTVGQRTLFNFTASITNSGQRDSDYTALVYANTSTAGPSPYPNKWLVGFDRLAAVAKEGGTAELNVPVAVDRLARVDEAGNTVLFPGRYEVALNNEREVVVEVELVGEQVVLLKWPEEVQGVAGDE.

Residues 1 to 17 (MAVAALALLALLPQALG) form the signal peptide. N-linked (GlcNAc...) asparagine glycosylation is found at asparagine 20, asparagine 115, asparagine 139, asparagine 234, and asparagine 243. Aspartate 307 is an active-site residue. Asparagine 349, asparagine 382, asparagine 404, asparagine 433, asparagine 444, asparagine 485, asparagine 489, asparagine 621, asparagine 652, asparagine 666, asparagine 688, and asparagine 710 each carry an N-linked (GlcNAc...) asparagine glycan.

The protein belongs to the glycosyl hydrolase 3 family.

It is found in the secreted. The enzyme catalyses Hydrolysis of (1-&gt;4)-beta-D-xylans, to remove successive D-xylose residues from the non-reducing termini.. Its pathway is glycan degradation; xylan degradation. Xylan 1,4-beta-xylosidase involved in the hydrolysis of xylan, a major structural heterogeneous polysaccharide found in plant biomass representing the second most abundant polysaccharide in the biosphere, after cellulose. The protein is Probable exo-1,4-beta-xylosidase xlnD (xlnD) of Aspergillus japonicus.